Here is a 201-residue protein sequence, read N- to C-terminus: Large ribosomal subunit protein uL4 (201 aa).

The segment at 44–71 (RAQKTRAEVSGSGKKPWRQKGTGRARSG) is disordered.

Belongs to the universal ribosomal protein uL4 family. Part of the 50S ribosomal subunit.

In terms of biological role, one of the primary rRNA binding proteins, this protein initially binds near the 5'-end of the 23S rRNA. It is important during the early stages of 50S assembly. It makes multiple contacts with different domains of the 23S rRNA in the assembled 50S subunit and ribosome. Its function is as follows. Forms part of the polypeptide exit tunnel. The polypeptide is Large ribosomal subunit protein uL4 (Actinobacillus succinogenes (strain ATCC 55618 / DSM 22257 / CCUG 43843 / 130Z)).